The following is a 98-amino-acid chain: Large ribosomal subunit protein bL28 (98 aa).

Belongs to the bacterial ribosomal protein bL28 family.

The polypeptide is Large ribosomal subunit protein bL28 (Bartonella bacilliformis (strain ATCC 35685 / KC583 / Herrer 020/F12,63)).